A 763-amino-acid polypeptide reads, in one-letter code: Amine oxidase [copper-containing] 3 (763 aa).

At 1 to 5 (MNQKT) the chain is on the cytoplasmic side. A helical; Signal-anchor for type II membrane protein transmembrane segment spans residues 6–26 (ILVLLILAVITIFALVCVLLV). Over 27–763 (GRGGDGGEPS…AFSHGGFSHN (737 aa)) the chain is Extracellular. The O-linked (GalNAc...) serine glycan is linked to S43. Residue N137 is glycosylated (N-linked (GlcNAc...) asparagine). A disulfide bridge connects residues C198 and C199. An O-linked (GalNAc...) threonine glycan is attached at T212. N-linked (GlcNAc...) asparagine glycosylation is found at N232 and N294. Residue D386 is the Proton acceptor of the active site. A disulfide bond links C404 and C430. Y471 serves as the catalytic Schiff-base intermediate with substrate; via topaquinone. Y471 carries the 2',4',5'-topaquinone modification. Cu(2+) is bound by residues H520 and H522. Positions 529, 530, 531, and 572 each coordinate Ca(2+). Residue N592 is glycosylated (N-linked (GlcNAc...) (complex) asparagine). The N-linked (GlcNAc...) asparagine glycan is linked to N618. Ca(2+) contacts are provided by E641, F663, and N665. N666 carries an N-linked (GlcNAc...) asparagine glycan. Residues E667, D673, and L674 each contribute to the Ca(2+) site. O-linked (GlcNAc) threonine glycosylation occurs at T679. H684 contributes to the Cu(2+) binding site. Cysteines 734 and 741 form a disulfide.

It belongs to the copper/topaquinone oxidase family. In terms of assembly, homodimer; disulfide-linked. Can heterodimerize with isoform 2 leading to reduced surface expression. Probably forms heterodimers with AOC2. The cofactor is Cu(2+). Ca(2+) serves as cofactor. Requires L-topaquinone as cofactor. Topaquinone (TPQ) is generated by copper-dependent autoxidation of a specific tyrosyl residue. Post-translationally, N- and O-glycosylated. As to expression, strongly expressed on the high endothelial venules of peripheral lymph nodes and on hepatic endothelia. Also highly expressed in appendix, lung and small intestine. Expressed also in adipose tissue, in bone marrow, colon, heart, kidney, ovary, pancreas, placenta, prostate, skeletal muscle, spleen and testis. Isoform 2 seems to be the predominant transcript in fetal kidneys, fetal cartilage and fetal tonsils. The highest relative expression of isoform 2 occurs in skeletal muscle, heart, pancreas, kidney, and lung.

It localises to the cell membrane. It carries out the reaction methylamine + O2 + H2O = formaldehyde + H2O2 + NH4(+). The catalysed reaction is benzylamine + O2 + H2O = benzaldehyde + H2O2 + NH4(+). The enzyme catalyses 2-phenylethylamine + O2 + H2O = 2-phenylacetaldehyde + H2O2 + NH4(+). Its function is as follows. Catalyzes the oxidative deamination of primary amines to the corresponding aldehydes with the concomitant production of hydrogen peroxide and ammonia. Has a preference for the primary monoamines methylamine and benzylamine. Could also act on 2-phenylethylamine but much less efficiently. At endothelial cells surface can also function as a cell adhesion protein that participates in lymphocyte extravasation and recirculation by mediating the binding of lymphocytes to peripheral lymph node vascular endothelial cells in an L-selectin-independent fashion. Functionally, has no semicarbazide-sensitive amine oxidase (SSAO) activity. The protein is Amine oxidase [copper-containing] 3 of Homo sapiens (Human).